The following is a 554-amino-acid chain: MTNEYLAPFVDELFNLGVREAVFSPGSRSTALAMLFEEYKKYDTYVNIDERSAAFFALGIAKANRRPVVLVCTSGSAAAHHFPAITEAKMSRIPLIILTADRPAELQFVGAPQTLDQTRFFGNFVNHFENLEAPQPQAKNFWTYPRKVAQRAFLSALDQMAGPVQINVPLRDPLVPKLKSENYEKGRYKLPFKFFKGQQSAFFDEALLSSKTLILAGANSAENYSESLLKLAEQLKAPILADPLSNLRNHNSPFVMDSYDAFLANDDLKTDLKAESILLFGQMPVSKRLQQFIALNDEAQFIQVDPALVYRNPSLTTTIMVQSNVTTFANSIQKVNQDFSYLEKWQKAQEKMRHQLEKVAQEENPFEGRFVQELQKHLKALDAQLLVSNSMEIRDIDYWWEKEDSKVRILGNRGVNGIDGTESTALGIATTGKPTVLLTGDLSMLHDLNGLIIGKTHELNLTIVLFNNDGGGIFHHLAQKGVPNFDYLFSTPHGLNFEGLAELTGLDYHLVSNYADFGQQFETSICQPGIHLLEIKTDKDLSLALHKKYTAYEN.

This sequence belongs to the TPP enzyme family. MenD subfamily. As to quaternary structure, homodimer. Mg(2+) is required as a cofactor. Mn(2+) serves as cofactor. Requires thiamine diphosphate as cofactor.

The catalysed reaction is isochorismate + 2-oxoglutarate + H(+) = 5-enolpyruvoyl-6-hydroxy-2-succinyl-cyclohex-3-ene-1-carboxylate + CO2. The protein operates within quinol/quinone metabolism; 1,4-dihydroxy-2-naphthoate biosynthesis; 1,4-dihydroxy-2-naphthoate from chorismate: step 2/7. It participates in quinol/quinone metabolism; menaquinone biosynthesis. Catalyzes the thiamine diphosphate-dependent decarboxylation of 2-oxoglutarate and the subsequent addition of the resulting succinic semialdehyde-thiamine pyrophosphate anion to isochorismate to yield 2-succinyl-5-enolpyruvyl-6-hydroxy-3-cyclohexene-1-carboxylate (SEPHCHC). This is 2-succinyl-5-enolpyruvyl-6-hydroxy-3-cyclohexene-1-carboxylate synthase from Lactococcus lactis subsp. cremoris (strain SK11).